The chain runs to 642 residues: Chaperone protein DnaK (642 aa).

Threonine 200 carries the post-translational modification Phosphothreonine; by autocatalysis. Positions 603–623 (AAAAEQGGNADAASGNAQASK) are enriched in low complexity. Residues 603-627 (AAAAEQGGNADAASGNAQASKAADD) form a disordered region.

It belongs to the heat shock protein 70 family.

Functionally, acts as a chaperone. In Xanthomonas campestris pv. campestris (strain B100), this protein is Chaperone protein DnaK.